The primary structure comprises 85 residues: UPF0297 protein LBA0418 (85 aa).

The protein belongs to the UPF0297 family.

This Lactobacillus acidophilus (strain ATCC 700396 / NCK56 / N2 / NCFM) protein is UPF0297 protein LBA0418.